We begin with the raw amino-acid sequence, 365 residues long: Mannonate dehydratase 1 (365 aa).

The protein belongs to the mannonate dehydratase family. Requires Fe(2+) as cofactor. Mn(2+) is required as a cofactor.

It carries out the reaction D-mannonate = 2-dehydro-3-deoxy-D-gluconate + H2O. It participates in carbohydrate metabolism; pentose and glucuronate interconversion. Its function is as follows. Catalyzes the dehydration of D-mannonate. The protein is Mannonate dehydratase 1 of Bacillus licheniformis (strain ATCC 14580 / DSM 13 / JCM 2505 / CCUG 7422 / NBRC 12200 / NCIMB 9375 / NCTC 10341 / NRRL NRS-1264 / Gibson 46).